The sequence spans 285 residues: uncharacterized protein (285 aa).

Residues 184–282 (HSICNWVQDN…GLTPGEYSAR (99 aa)) enclose the HTH araC/xylS-type domain. DNA-binding regions (H-T-H motif) lie at residues 201–222 (ESVAQFFNITPNHLSKLFAQHG) and 249–272 (IHEVAQRCGFPDSDYFCRVFRRQF).

This is an uncharacterized protein from Escherichia coli (strain K12).